A 130-amino-acid chain; its full sequence is Small ribosomal subunit protein uS9 (130 aa).

It belongs to the universal ribosomal protein uS9 family.

This chain is Small ribosomal subunit protein uS9, found in Bordetella bronchiseptica (strain ATCC BAA-588 / NCTC 13252 / RB50) (Alcaligenes bronchisepticus).